Here is a 184-residue protein sequence, read N- to C-terminus: ATP synthase subunit b, chloroplastic (184 aa).

Residues 27–49 (LATNPINLSVVLGVLIFFGKGVL) traverse the membrane as a helical segment.

It belongs to the ATPase B chain family. As to quaternary structure, F-type ATPases have 2 components, F(1) - the catalytic core - and F(0) - the membrane proton channel. F(1) has five subunits: alpha(3), beta(3), gamma(1), delta(1), epsilon(1). F(0) has four main subunits: a(1), b(1), b'(1) and c(10-14). The alpha and beta chains form an alternating ring which encloses part of the gamma chain. F(1) is attached to F(0) by a central stalk formed by the gamma and epsilon chains, while a peripheral stalk is formed by the delta, b and b' chains.

It is found in the plastid. The protein resides in the chloroplast thylakoid membrane. Its function is as follows. F(1)F(0) ATP synthase produces ATP from ADP in the presence of a proton or sodium gradient. F-type ATPases consist of two structural domains, F(1) containing the extramembraneous catalytic core and F(0) containing the membrane proton channel, linked together by a central stalk and a peripheral stalk. During catalysis, ATP synthesis in the catalytic domain of F(1) is coupled via a rotary mechanism of the central stalk subunits to proton translocation. In terms of biological role, component of the F(0) channel, it forms part of the peripheral stalk, linking F(1) to F(0). The sequence is that of ATP synthase subunit b, chloroplastic from Phalaenopsis aphrodite subsp. formosana (Moth orchid).